Consider the following 479-residue polypeptide: UDP-N-acetylmuramoylalanine--D-glutamate ligase (479 aa).

110–116 (GTNGKTS) contacts ATP.

Belongs to the MurCDEF family.

The protein resides in the cytoplasm. The catalysed reaction is UDP-N-acetyl-alpha-D-muramoyl-L-alanine + D-glutamate + ATP = UDP-N-acetyl-alpha-D-muramoyl-L-alanyl-D-glutamate + ADP + phosphate + H(+). It participates in cell wall biogenesis; peptidoglycan biosynthesis. Functionally, cell wall formation. Catalyzes the addition of glutamate to the nucleotide precursor UDP-N-acetylmuramoyl-L-alanine (UMA). The sequence is that of UDP-N-acetylmuramoylalanine--D-glutamate ligase from Bifidobacterium adolescentis (strain ATCC 15703 / DSM 20083 / NCTC 11814 / E194a).